We begin with the raw amino-acid sequence, 291 residues long: Bifunctional protein FolD 1 (291 aa).

NADP(+) contacts are provided by residues 167-169, Ile-192, and Ile-233; that span reads GAS.

Belongs to the tetrahydrofolate dehydrogenase/cyclohydrolase family. As to quaternary structure, homodimer.

The catalysed reaction is (6R)-5,10-methylene-5,6,7,8-tetrahydrofolate + NADP(+) = (6R)-5,10-methenyltetrahydrofolate + NADPH. It carries out the reaction (6R)-5,10-methenyltetrahydrofolate + H2O = (6R)-10-formyltetrahydrofolate + H(+). It participates in one-carbon metabolism; tetrahydrofolate interconversion. Catalyzes the oxidation of 5,10-methylenetetrahydrofolate to 5,10-methenyltetrahydrofolate and then the hydrolysis of 5,10-methenyltetrahydrofolate to 10-formyltetrahydrofolate. The polypeptide is Bifunctional protein FolD 1 (Pseudomonas putida (strain ATCC 47054 / DSM 6125 / CFBP 8728 / NCIMB 11950 / KT2440)).